Consider the following 194-residue polypeptide: Recombination protein RecR (194 aa).

The segment at 53–68 (CEICFNLDVTSPCSIC) adopts a C4-type zinc-finger fold. Residues 76–171 (SLLCIVEELG…KVTRLACGIP (96 aa)) enclose the Toprim domain.

This sequence belongs to the RecR family.

Functionally, may play a role in DNA repair. It seems to be involved in an RecBC-independent recombinational process of DNA repair. It may act with RecF and RecO. The sequence is that of Recombination protein RecR from Anaplasma phagocytophilum (strain HZ).